Here is a 362-residue protein sequence, read N- to C-terminus: 3-dehydroquinate synthase (362 aa).

NAD(+)-binding positions include 71-76, 105-109, 129-130, lysine 142, lysine 151, and 169-172; these read DGEQYK, GVVGD, TT, and CLKT. Zn(2+)-binding residues include glutamate 184, histidine 248, and histidine 265.

It belongs to the sugar phosphate cyclases superfamily. Dehydroquinate synthase family. Co(2+) is required as a cofactor. Requires Zn(2+) as cofactor. It depends on NAD(+) as a cofactor.

The protein resides in the cytoplasm. The catalysed reaction is 7-phospho-2-dehydro-3-deoxy-D-arabino-heptonate = 3-dehydroquinate + phosphate. It participates in metabolic intermediate biosynthesis; chorismate biosynthesis; chorismate from D-erythrose 4-phosphate and phosphoenolpyruvate: step 2/7. Its function is as follows. Catalyzes the conversion of 3-deoxy-D-arabino-heptulosonate 7-phosphate (DAHP) to dehydroquinate (DHQ). The polypeptide is 3-dehydroquinate synthase (Yersinia pseudotuberculosis serotype O:1b (strain IP 31758)).